The primary structure comprises 934 residues: Bifunctional uridylyltransferase/uridylyl-removing enzyme (934 aa).

The uridylyltransferase stretch occupies residues 1-379 (MSAHDLKLEE…TFSRRKRKLS (379 aa)). The uridylyl-removing stretch occupies residues 380–736 (ADGDFVSENH…AKPHTFEAVT (357 aa)). Residues 496–613 (VDEHLLRCIA…IDFADTVQTM (118 aa)) enclose the HD domain. ACT domains follow at residues 737–819 (EITV…VLAK) and 848–931 (VIEV…RSSQ).

Belongs to the GlnD family. Requires Mg(2+) as cofactor.

The catalysed reaction is [protein-PII]-L-tyrosine + UTP = [protein-PII]-uridylyl-L-tyrosine + diphosphate. It catalyses the reaction [protein-PII]-uridylyl-L-tyrosine + H2O = [protein-PII]-L-tyrosine + UMP + H(+). Its activity is regulated as follows. Uridylyltransferase (UTase) activity is inhibited by glutamine, while glutamine activates uridylyl-removing (UR) activity. Modifies, by uridylylation and deuridylylation, the PII regulatory proteins (GlnB and homologs), in response to the nitrogen status of the cell that GlnD senses through the glutamine level. Under low glutamine levels, catalyzes the conversion of the PII proteins and UTP to PII-UMP and PPi, while under higher glutamine levels, GlnD hydrolyzes PII-UMP to PII and UMP (deuridylylation). Thus, controls uridylylation state and activity of the PII proteins, and plays an important role in the regulation of nitrogen assimilation and metabolism. The polypeptide is Bifunctional uridylyltransferase/uridylyl-removing enzyme (Brucella anthropi (strain ATCC 49188 / DSM 6882 / CCUG 24695 / JCM 21032 / LMG 3331 / NBRC 15819 / NCTC 12168 / Alc 37) (Ochrobactrum anthropi)).